A 335-amino-acid chain; its full sequence is Biotin synthase (335 aa).

Positions 47 to 276 (FYGKKVKLNM…SKEIRISGGR (230 aa)) constitute a Radical SAM core domain. C65, C69, and C72 together coordinate [4Fe-4S] cluster. The [2Fe-2S] cluster site is built by C109, C141, C201, and R271.

Belongs to the radical SAM superfamily. Biotin synthase family. Homodimer. [4Fe-4S] cluster serves as cofactor. It depends on [2Fe-2S] cluster as a cofactor.

It carries out the reaction (4R,5S)-dethiobiotin + (sulfur carrier)-SH + 2 reduced [2Fe-2S]-[ferredoxin] + 2 S-adenosyl-L-methionine = (sulfur carrier)-H + biotin + 2 5'-deoxyadenosine + 2 L-methionine + 2 oxidized [2Fe-2S]-[ferredoxin]. It functions in the pathway cofactor biosynthesis; biotin biosynthesis; biotin from 7,8-diaminononanoate: step 2/2. Its function is as follows. Catalyzes the conversion of dethiobiotin (DTB) to biotin by the insertion of a sulfur atom into dethiobiotin via a radical-based mechanism. This Bacillus subtilis (strain 168) protein is Biotin synthase.